The primary structure comprises 678 residues: Growth arrest-specific protein 6 (678 aa).

Residues 1-30 form the signal peptide; sequence MAPSLSPGPAALRRAPQLLLLLLAAECALA. Positions 53 to 94 constitute a Gla domain; sequence FEEAKQGHLERECVEELCSREEAREVFENDPETDYFYPRYLD. Cys65 and Cys70 are oxidised to a cystine. Phosphoserine; by FAM20C is present on Ser71. The 39-residue stretch at 116-154 folds into the EGF-like 1; calcium-binding domain; sequence LPDQCTPNPCDRKGTQACQDLMGNFFCLCKAGWGGRLCD. 14 cysteine pairs are disulfide-bonded: Cys120-Cys133, Cys125-Cys142, Cys144-Cys153, Cys160-Cys171, Cys167-Cys180, Cys182-Cys195, Cys201-Cys212, Cys207-Cys221, Cys223-Cys236, Cys242-Cys251, Cys247-Cys260, Cys262-Cys277, Cys283-Cys570, and Cys444-Cys470. Residues 156–196 form the EGF-like 2; calcium-binding domain; that stretch reads DVNECSQENGGCLQICHNKPGSFHCSCHSGFELSSDGRTCQ. The EGF-like 3; calcium-binding domain occupies 197 to 237; sequence DIDECADSEACGEARCKNLPGSYSCLCDEGFAYSSQEKACR. The 41-residue stretch at 238-278 folds into the EGF-like 4; calcium-binding domain; it reads DVDECLQGRCEQVCVNSPGSYTCHCDGRGGLKLSQDMDTCE. 2 consecutive Laminin G-like domains span residues 298 to 470 and 477 to 670; these read GRMF…RMQC and GSFY…AHSC. The Ca(2+) site is built by Asp329 and Glu331. Residue Asn420 is glycosylated (N-linked (GlcNAc...) asparagine). Arg440 is a binding site for Ca(2+). Residues Thr621 and Thr637 each carry the phosphothreonine modification. Phosphotyrosine is present on Tyr640. Cysteines 643 and 670 form a disulfide. Position 656 (Asp656) interacts with Ca(2+).

In terms of assembly, heterodimer and heterotetramer with AXL. In terms of processing, proteolytically processed after secretion to yield a N-terminal 36 kDa protein and a C-terminal 50 kDa protein including the laminin G-like domains which activates AXL. Gamma-carboxyglutamate residues are formed by vitamin K dependent carboxylation. These residues are essential for the binding of calcium. Plasma. Isoform 1 and isoform 2 are widely expressed, isoform 1 being expressed at higher levels than isoform 2 in most tissues. Isoform 2 is the predominant form in spleen.

Its subcellular location is the secreted. Functionally, ligand for tyrosine-protein kinase receptors AXL, TYRO3 and MER whose signaling is implicated in cell growth and survival, cell adhesion and cell migration. GAS6/AXL signaling plays a role in various processes such as endothelial cell survival during acidification by preventing apoptosis, optimal cytokine signaling during human natural killer cell development, hepatic regeneration, gonadotropin-releasing hormone neuron survival and migration, platelet activation, or regulation of thrombotic responses. (Microbial infection) Can bridge virus envelope phosphatidylserine to the TAM receptor tyrosine kinase Axl to mediate viral entry by apoptotic mimicry. Plays a role in Dengue cell entry by apoptotic mimicry. Plays a role in Vaccinia virus cell entry by apoptotic mimicry. Plays a role in ebolavirus and marburgvirus cell entry by apoptotic mimicry. This Homo sapiens (Human) protein is Growth arrest-specific protein 6.